A 105-amino-acid polypeptide reads, in one-letter code: NADH-quinone oxidoreductase subunit K (105 aa).

Helical transmembrane passes span 7–27 (IGVNHFLTISVLLFSLGMFAV), 34–54 (IVILMGVELILNAANINFLTF), and 66–86 (FSLFVIVLAAAEAAVALAIVI).

It belongs to the complex I subunit 4L family. As to quaternary structure, NDH-1 is composed of 14 different subunits. Subunits NuoA, H, J, K, L, M, N constitute the membrane sector of the complex.

The protein localises to the cell inner membrane. It catalyses the reaction a quinone + NADH + 5 H(+)(in) = a quinol + NAD(+) + 4 H(+)(out). In terms of biological role, NDH-1 shuttles electrons from NADH, via FMN and iron-sulfur (Fe-S) centers, to quinones in the respiratory chain. The immediate electron acceptor for the enzyme in this species is believed to be a menaquinone. Couples the redox reaction to proton translocation (for every two electrons transferred, four hydrogen ions are translocated across the cytoplasmic membrane), and thus conserves the redox energy in a proton gradient. This Chlorobaculum parvum (strain DSM 263 / NCIMB 8327) (Chlorobium vibrioforme subsp. thiosulfatophilum) protein is NADH-quinone oxidoreductase subunit K.